Consider the following 445-residue polypeptide: POU domain, class 3, transcription factor 2 (445 aa).

Disordered stretches follow at residues Ala64–Ala173 and Leu203–Ser269. The segment covering His67–Gly90 has biased composition (gly residues). 2 stretches are compositionally biased toward low complexity: residues Gln125–Gln151 and His163–Ala173. Residues Leu217–His226 are compositionally biased toward basic and acidic residues. Basic residues predominate over residues Ala227–Pro237. A compositionally biased stretch (pro residues) spans Gln239–His253. In terms of domain architecture, POU-specific spans Glu264–Asp338. Ser343 bears the Phosphoserine mark. The homeobox DNA-binding region spans Lys356 to Thr415. The segment at Glu411–Gln445 is disordered.

This sequence belongs to the POU transcription factor family. Class-3 subfamily. As to quaternary structure, interacts with PQBP1. Interaction with ISL1. In terms of tissue distribution, expressed specifically in the neuroectodermal cell lineage.

The protein localises to the nucleus. Functionally, transcription factor that plays a key role in neuronal differentiation. Binds preferentially to the recognition sequence which consists of two distinct half-sites, ('GCAT') and ('TAAT'), separated by a non-conserved spacer region of 0, 2, or 3 nucleotides. Acts as a transcriptional activator when binding cooperatively with SOX4, SOX11, or SOX12 to gene promoters. The combination of three transcription factors, ASCL1, POU3F2/BRN2 and MYT1L, is sufficient to reprogram fibroblasts and other somatic cells into induced neuronal (iN) cells in vitro. Acts downstream of ASCL1, accessing chromatin that has been opened by ASCL1, and promotes transcription of neuronal genes. This Mus musculus (Mouse) protein is POU domain, class 3, transcription factor 2 (Pou3f2).